A 190-amino-acid polypeptide reads, in one-letter code: dTTP/UTP pyrophosphatase (190 aa).

Residue Asp-69 is the Proton acceptor of the active site.

The protein belongs to the Maf family. YhdE subfamily. The cofactor is a divalent metal cation.

It localises to the cytoplasm. It carries out the reaction dTTP + H2O = dTMP + diphosphate + H(+). The enzyme catalyses UTP + H2O = UMP + diphosphate + H(+). Its function is as follows. Nucleoside triphosphate pyrophosphatase that hydrolyzes dTTP and UTP. May have a dual role in cell division arrest and in preventing the incorporation of modified nucleotides into cellular nucleic acids. The polypeptide is dTTP/UTP pyrophosphatase (Sphingopyxis alaskensis (strain DSM 13593 / LMG 18877 / RB2256) (Sphingomonas alaskensis)).